The sequence spans 959 residues: UPF0182 protein MAE_41360 (959 aa).

9 helical membrane-spanning segments follow: residues 13 to 33, 50 to 70, 99 to 119, 156 to 176, 184 to 204, 239 to 259, 276 to 296, 319 to 339, and 362 to 382; these read PILL…VVAN, LSWQ…FIFT, LLGL…MLLY, DISS…GLLI, IISI…WANF, LWLT…YLFS, LRHL…HHII, VGQF…IWLG, and FFPY…GTII.

The protein belongs to the UPF0182 family.

It localises to the cell membrane. The protein is UPF0182 protein MAE_41360 of Microcystis aeruginosa (strain NIES-843 / IAM M-2473).